A 357-amino-acid chain; its full sequence is Alanine racemase (357 aa).

Catalysis depends on Lys-33, which acts as the Proton acceptor; specific for D-alanine. N6-(pyridoxal phosphate)lysine is present on Lys-33. Arg-129 is a binding site for substrate. Tyr-253 serves as the catalytic Proton acceptor; specific for L-alanine. Position 301 (Met-301) interacts with substrate.

It belongs to the alanine racemase family. The cofactor is pyridoxal 5'-phosphate.

The catalysed reaction is L-alanine = D-alanine. It functions in the pathway amino-acid biosynthesis; D-alanine biosynthesis; D-alanine from L-alanine: step 1/1. In terms of biological role, catalyzes the interconversion of L-alanine and D-alanine. May also act on other amino acids. This Pseudomonas syringae pv. syringae (strain B728a) protein is Alanine racemase (alr).